The following is an 865-amino-acid chain: Protein translocase subunit SecA (865 aa).

Residues glutamine 93, 111-115 (GEGKT), and aspartate 501 contribute to the ATP site. The Zn(2+) site is built by cysteine 841, cysteine 843, cysteine 852, and cysteine 853.

It belongs to the SecA family. In terms of assembly, monomer and homodimer. Part of the essential Sec protein translocation apparatus which comprises SecA, SecYEG and auxiliary proteins SecDF-YajC and YidC. Requires Zn(2+) as cofactor.

The protein localises to the cell inner membrane. It is found in the cytoplasm. It catalyses the reaction ATP + H2O + cellular proteinSide 1 = ADP + phosphate + cellular proteinSide 2.. Its function is as follows. Part of the Sec protein translocase complex. Interacts with the SecYEG preprotein conducting channel. Has a central role in coupling the hydrolysis of ATP to the transfer of proteins into and across the cell membrane, serving as an ATP-driven molecular motor driving the stepwise translocation of polypeptide chains across the membrane. This is Protein translocase subunit SecA from Helicobacter acinonychis (strain Sheeba).